A 133-amino-acid polypeptide reads, in one-letter code: Small ribosomal subunit protein uS11 (133 aa).

The interval 114–133 (VTPIPHDGTRPPGGKRGRRV) is disordered.

It belongs to the universal ribosomal protein uS11 family. In terms of assembly, part of the 30S ribosomal subunit.

Located on the platform of the 30S subunit. In Archaeoglobus fulgidus (strain ATCC 49558 / DSM 4304 / JCM 9628 / NBRC 100126 / VC-16), this protein is Small ribosomal subunit protein uS11.